A 224-amino-acid chain; its full sequence is Ribosome maturation factor RimP (224 aa).

The segment at 194 to 224 (REGRIPGDDLGSEEAGEQSDETASGEAEDKE) is disordered. Over residues 203–213 (LGSEEAGEQSD) the composition is skewed to acidic residues.

Belongs to the RimP family.

Its subcellular location is the cytoplasm. Its function is as follows. Required for maturation of 30S ribosomal subunits. The polypeptide is Ribosome maturation factor RimP (Brucella anthropi (strain ATCC 49188 / DSM 6882 / CCUG 24695 / JCM 21032 / LMG 3331 / NBRC 15819 / NCTC 12168 / Alc 37) (Ochrobactrum anthropi)).